We begin with the raw amino-acid sequence, 331 residues long: UPF0324 membrane protein YdhF (331 aa).

The next 8 helical transmembrane spans lie at 2-20, 24-46, 82-104, 114-136, 148-170, 204-226, 247-269, and 308-330; these read SILPGFLLSFAIAIVSYLL, IFHSLGSATIAILLGIILGNLYF, LGFSGVGFILIQMISTIIFVLFM, VSALMASGNAVCGSSAIAAVEPV, IAMVNLMGTILMLSLPFLGTWMF, TLATLFKIMRIIMLVFVVLYFGF, SFLPWYVLGFLVLCTLDTLIHFV, and LIYGLSTLVFQVVLALILISLLI.

This sequence belongs to the UPF0324 family.

The protein resides in the cell membrane. This chain is UPF0324 membrane protein YdhF (ydhF), found in Lactococcus lactis subsp. lactis (strain IL1403) (Streptococcus lactis).